Here is a 300-residue protein sequence, read N- to C-terminus: Acetylglutamate kinase (300 aa).

Residues 73–74 (GG), arginine 95, and asparagine 197 contribute to the substrate site.

Belongs to the acetylglutamate kinase family. ArgB subfamily.

The protein resides in the cytoplasm. The catalysed reaction is N-acetyl-L-glutamate + ATP = N-acetyl-L-glutamyl 5-phosphate + ADP. Its pathway is amino-acid biosynthesis; L-arginine biosynthesis; N(2)-acetyl-L-ornithine from L-glutamate: step 2/4. Functionally, catalyzes the ATP-dependent phosphorylation of N-acetyl-L-glutamate. In Bordetella pertussis (strain Tohama I / ATCC BAA-589 / NCTC 13251), this protein is Acetylglutamate kinase.